Here is a 269-residue protein sequence, read N- to C-terminus: Hemin import ATP-binding protein HmuV (269 aa).

The ABC transporter domain occupies 5-242 (IETHSVTMRI…GLIRKVFEVC (238 aa)). Position 37-44 (37-44 (GPNGAGKS)) interacts with ATP.

It belongs to the ABC transporter superfamily. Heme (hemin) importer (TC 3.A.1.14.5) family. The complex is composed of two ATP-binding proteins (HmuV), two transmembrane proteins (HmuU) and a solute-binding protein (HmuT).

The protein resides in the cell inner membrane. Its function is as follows. Part of the ABC transporter complex HmuTUV involved in hemin import. Responsible for energy coupling to the transport system. This chain is Hemin import ATP-binding protein HmuV, found in Nitrobacter winogradskyi (strain ATCC 25391 / DSM 10237 / CIP 104748 / NCIMB 11846 / Nb-255).